The chain runs to 335 residues: UPF0353 protein MLBr01808 (335 aa).

Helical transmembrane passes span 18 to 38 (WFFL…MMQV) and 67 to 87 (VPAI…AGPT). One can recognise a VWFA domain in the interval 98–294 (VVMLVIDVSQ…AELKAVYASL (197 aa)). A helical transmembrane segment spans residues 309 to 329 (AGWLRLGVLVLALAALTALLI).

Belongs to the UPF0353 family.

The protein localises to the cell membrane. The protein is UPF0353 protein MLBr01808 of Mycobacterium leprae (strain Br4923).